The sequence spans 285 residues: Glutamate racemase (285 aa).

Substrate is bound by residues 30-31 (DS) and 62-63 (YG). Catalysis depends on Cys-94, which acts as the Proton donor/acceptor. Position 95 to 96 (95 to 96 (NT)) interacts with substrate. Cys-206 serves as the catalytic Proton donor/acceptor. 207 to 208 (TH) is a binding site for substrate.

It belongs to the aspartate/glutamate racemases family.

The catalysed reaction is L-glutamate = D-glutamate. Its pathway is cell wall biogenesis; peptidoglycan biosynthesis. In terms of biological role, provides the (R)-glutamate required for cell wall biosynthesis. This chain is Glutamate racemase, found in Pectobacterium atrosepticum (strain SCRI 1043 / ATCC BAA-672) (Erwinia carotovora subsp. atroseptica).